Reading from the N-terminus, the 224-residue chain is Cytidylate kinase (224 aa).

Residue 11 to 19 (GPAGAGKST) coordinates ATP.

This sequence belongs to the cytidylate kinase family. Type 1 subfamily.

Its subcellular location is the cytoplasm. It catalyses the reaction CMP + ATP = CDP + ADP. It carries out the reaction dCMP + ATP = dCDP + ADP. In Lysinibacillus sphaericus (strain C3-41), this protein is Cytidylate kinase.